A 272-amino-acid chain; its full sequence is Type II secretion system protein C (272 aa).

At 1-16 (MNISKLPPLSPSVIRR) the chain is on the cytoplasmic side. A helical membrane pass occupies residues 17–35 (ILFYLLMLLFCQQLAMIFW). The Periplasmic segment spans residues 36 to 272 (RIGLPDNAPV…DIYMEFGGDE (237 aa)).

The protein belongs to the GSP C family.

The protein resides in the cell inner membrane. In terms of biological role, involved in a type II secretion system (T2SS, formerly general secretion pathway, GSP) for the export of proteins. Required for the translocation of the multiple pectic enzymes. The protein is Type II secretion system protein C (outC) of Dickeya dadantii (strain 3937) (Erwinia chrysanthemi (strain 3937)).